The primary structure comprises 432 residues: D-amino acid dehydrogenase (432 aa).

3-17 (VLVLGSGVIGTTTAY) provides a ligand contact to FAD.

This sequence belongs to the DadA oxidoreductase family. FAD serves as cofactor.

The catalysed reaction is a D-alpha-amino acid + A + H2O = a 2-oxocarboxylate + AH2 + NH4(+). Its pathway is amino-acid degradation; D-alanine degradation; NH(3) and pyruvate from D-alanine: step 1/1. Oxidative deamination of D-amino acids. The sequence is that of D-amino acid dehydrogenase from Azotobacter vinelandii (strain DJ / ATCC BAA-1303).